A 180-amino-acid chain; its full sequence is DNA-directed RNA polymerase subunit Rpo7 (180 aa).

Residues 82–165 (QEVVEGEVLQ…RLPRIALTMR (84 aa)) form the S1 motif domain.

The protein belongs to the eukaryotic RPB7/RPC8 RNA polymerase subunit family. In terms of assembly, part of the 13-subunit RNA polymerase complex. Forms a stalk with Rpo4 that extends from the main structure.

The protein localises to the cytoplasm. It carries out the reaction RNA(n) + a ribonucleoside 5'-triphosphate = RNA(n+1) + diphosphate. Its function is as follows. DNA-dependent RNA polymerase (RNAP) catalyzes the transcription of DNA into RNA using the four ribonucleoside triphosphates as substrates. This chain is DNA-directed RNA polymerase subunit Rpo7, found in Saccharolobus solfataricus (strain ATCC 35092 / DSM 1617 / JCM 11322 / P2) (Sulfolobus solfataricus).